A 298-amino-acid polypeptide reads, in one-letter code: Probable 2-(5''-triphosphoribosyl)-3'-dephosphocoenzyme-A synthase 2 (298 aa).

Belongs to the CitG/MdcB family.

The enzyme catalyses 3'-dephospho-CoA + ATP = 2'-(5''-triphospho-alpha-D-ribosyl)-3'-dephospho-CoA + adenine. The sequence is that of Probable 2-(5''-triphosphoribosyl)-3'-dephosphocoenzyme-A synthase 2 from Salmonella paratyphi A (strain ATCC 9150 / SARB42).